We begin with the raw amino-acid sequence, 328 residues long: Fructokinase-2 (328 aa).

Belongs to the carbohydrate kinase PfkB family.

It catalyses the reaction D-fructose + ATP = D-fructose 6-phosphate + ADP + H(+). It participates in glycan biosynthesis; starch biosynthesis. In terms of biological role, may play an important role in maintaining the flux of carbon towards starch formation. The protein is Fructokinase-2 (FRK2) of Solanum habrochaites (Wild tomato).